We begin with the raw amino-acid sequence, 295 residues long: Deoxyuridine 5'-triphosphate nucleotidohydrolase (295 aa).

Residue 178-180 (RSG) participates in substrate binding. Residues 260–272 (NSVRKHTHEDNPV) show a composition bias toward basic and acidic residues. The segment at 260-295 (NSVRKHTHEDNPVHEPNVATASADIRGTKGLGSSGF) is disordered.

The protein belongs to the dUTPase family. Requires Mg(2+) as cofactor.

The catalysed reaction is dUTP + H2O = dUMP + diphosphate + H(+). Functionally, involved in nucleotide metabolism: produces dUMP, the immediate precursor of thymidine nucleotides and decreases the intracellular concentration of dUTP to avoid uracil incorporation into viral DNA. The protein is Deoxyuridine 5'-triphosphate nucleotidohydrolase of Human herpesvirus 8 type P (isolate GK18) (HHV-8).